Here is a 122-residue protein sequence, read N- to C-terminus: U19-hexatoxin-Hi1a (122 aa).

Positions 1-18 (MNTMIGFIVLLVSATVLG) are cleaved as a signal peptide. A propeptide spanning residues 19–80 (DPELDALRKE…YENSNFREKR (62 aa)) is cleaved from the precursor. Cystine bridges form between C81–C96, C88–C101, and C95–C116.

As to expression, expressed by the venom gland.

Its subcellular location is the secreted. In terms of biological role, probable ion channel inhibitor. This chain is U19-hexatoxin-Hi1a, found in Hadronyche infensa (Fraser island funnel-web spider).